Consider the following 305-residue polypeptide: Uracil-DNA glycosylase (305 aa).

Aspartate 148 (proton acceptor) is an active-site residue.

Belongs to the uracil-DNA glycosylase (UDG) superfamily. UNG family.

It localises to the host nucleus. The enzyme catalyses Hydrolyzes single-stranded DNA or mismatched double-stranded DNA and polynucleotides, releasing free uracil.. Functionally, excises uracil residues from the DNA which can arise as a result of misincorporation of dUMP residues by DNA polymerase or deamination of cytosines. Therefore may reduce deleterious uracil incorporation into the viral genome, particularly in terminally differentiated cells which lack DNA repair enzymes. This chain is Uracil-DNA glycosylase, found in Varicella-zoster virus (strain Dumas) (HHV-3).